The primary structure comprises 469 residues: MTRPVRTRFAPSPTGFIHLGNIRSALYPWAFARKMKGTFVLRIEDTDLERSTEASVDAILEGMAWLGLDYDEGPYYQMQRMDRYREVLAQMLEKDLVYPCYMSTEELDALRERQRAAGEKPRYDGTWRPEPGKVLPEPPAGVTPVLRFRNPLTGSVVWDDAVKGRVEISNEELDDLVIARPDGTPTYNFCVVVDDLDMGITHVIRGDDHVNNTPRQINILRALGGEVPVYAHLPTVLNEQGEKMSKRHGAMSVMGYRDAGYLPEAVLNYLARLGWSHGDAEIFSREQFVEWFDLEHLGKSPAQYDHNKLNWLNNHYIKEADDARLAELAKPFFAALGIDADTIARGPDLVGVMGLMKDRASTVKEIAENSTMFYRSPAPDAQALAQHVTDAVRPALAEFAAALKTAEWTKEAIAAALKAVLGAHKLKMPQLAMPVRLLVAGTTHTPSIDAVLLLFGRDVVVSRLAAALA.

Residues 11–21 carry the 'HIGH' region motif; the sequence is PSPTGFIHLGN. The span at 118–131 shows a compositional bias: basic and acidic residues; it reads GEKPRYDGTWRPEP. The tract at residues 118–139 is disordered; that stretch reads GEKPRYDGTWRPEPGKVLPEPP. Positions 243-247 match the 'KMSKS' region motif; the sequence is KMSKR. ATP is bound at residue Lys-246.

Belongs to the class-I aminoacyl-tRNA synthetase family. Glutamate--tRNA ligase type 1 subfamily. In terms of assembly, monomer.

It localises to the cytoplasm. It catalyses the reaction tRNA(Glu) + L-glutamate + ATP = L-glutamyl-tRNA(Glu) + AMP + diphosphate. Its function is as follows. Catalyzes the attachment of glutamate to tRNA(Glu) in a two-step reaction: glutamate is first activated by ATP to form Glu-AMP and then transferred to the acceptor end of tRNA(Glu). The chain is Glutamate--tRNA ligase from Burkholderia mallei (strain NCTC 10247).